A 381-amino-acid chain; its full sequence is Probable peptidoglycan glycosyltransferase FtsW (381 aa).

The next 9 membrane-spanning stretches (helical) occupy residues 16–36 (LVLLLMVVALTSFGIVMVYSA), 56–76 (LIFALVGCVGALVTMRIDYQL), 80–100 (WAVPLLFVSLILLVLVLIPGI), 145–165 (LLSAGFLPYMVVLMILLGLLL), 168–188 (PDMGAALTLAAVTIIMLFAAG), 191–211 (LIFILGSGMVAMPFVVYLVVH), 274–294 (VIGEELGFIGVIVIIGMFFIL), 312–332 (FLALGIAVLFAIEAVVNMAVV), and 343–363 (LPFLSYGGSSLLISLFAVGIL).

It belongs to the SEDS family. FtsW subfamily.

It is found in the cell inner membrane. The enzyme catalyses [GlcNAc-(1-&gt;4)-Mur2Ac(oyl-L-Ala-gamma-D-Glu-L-Lys-D-Ala-D-Ala)](n)-di-trans,octa-cis-undecaprenyl diphosphate + beta-D-GlcNAc-(1-&gt;4)-Mur2Ac(oyl-L-Ala-gamma-D-Glu-L-Lys-D-Ala-D-Ala)-di-trans,octa-cis-undecaprenyl diphosphate = [GlcNAc-(1-&gt;4)-Mur2Ac(oyl-L-Ala-gamma-D-Glu-L-Lys-D-Ala-D-Ala)](n+1)-di-trans,octa-cis-undecaprenyl diphosphate + di-trans,octa-cis-undecaprenyl diphosphate + H(+). The protein operates within cell wall biogenesis; peptidoglycan biosynthesis. In terms of biological role, peptidoglycan polymerase that is essential for cell division. This Trichlorobacter lovleyi (strain ATCC BAA-1151 / DSM 17278 / SZ) (Geobacter lovleyi) protein is Probable peptidoglycan glycosyltransferase FtsW.